The following is a 108-amino-acid chain: UPF0060 membrane protein Sputw3181_1172 (108 aa).

4 helical membrane-spanning segments follow: residues 3 to 23 (VITT…GCYL), 31 to 51 (GASA…AWLL), 63 to 83 (AAYG…VDGI), and 87 to 107 (RWDL…MFAP).

It belongs to the UPF0060 family.

It localises to the cell inner membrane. The chain is UPF0060 membrane protein Sputw3181_1172 from Shewanella sp. (strain W3-18-1).